Here is a 697-residue protein sequence, read N- to C-terminus: Colicin-D (697 aa).

The short motif at 17–24 (HSMVVWPS) is the TonB box element.

Belongs to the cloacin colicin family.

Functionally, colicins are polypeptide toxins produced by and active against E.coli and closely related bacteria. Colicin D inhibits protein synthesis. The protein is Colicin-D (cda) of Escherichia coli.